Here is a 294-residue protein sequence, read N- to C-terminus: 4-hydroxy-tetrahydrodipicolinate synthase (294 aa).

Threonine 47 serves as a coordination point for pyruvate. The active-site Proton donor/acceptor is tyrosine 135. Lysine 163 functions as the Schiff-base intermediate with substrate in the catalytic mechanism. Isoleucine 206 serves as a coordination point for pyruvate.

It belongs to the DapA family. Homodimer.

It localises to the cytoplasm. The catalysed reaction is L-aspartate 4-semialdehyde + pyruvate = (2S,4S)-4-hydroxy-2,3,4,5-tetrahydrodipicolinate + H2O + H(+). Its pathway is amino-acid biosynthesis; L-lysine biosynthesis via DAP pathway; (S)-tetrahydrodipicolinate from L-aspartate: step 3/4. Its function is as follows. Catalyzes the condensation of (S)-aspartate-beta-semialdehyde [(S)-ASA] and pyruvate to 4-hydroxy-tetrahydrodipicolinate (HTPA). The protein is 4-hydroxy-tetrahydrodipicolinate synthase of Staphylococcus haemolyticus (strain JCSC1435).